Reading from the N-terminus, the 72-residue chain is General transcription factor IIH subunit 5 (72 aa).

It belongs to the TFB5 family. Component of the 7-subunit TFIIH core complex composed of XPB/repB, XPD/repD, gtf2h1, gtf2h2, gtf2h3, gtf2h4 and gtf2h5, which is active in NER. The core complex associates with the 3-subunit CDK-activating kinase (CAK) module composed of cycH/cyclin H, cdk7 and mnat1 to form the 10-subunit holoenzyme (holo-TFIIH) active in transcription.

It localises to the nucleus. Component of the general transcription and DNA repair factor IIH (TFIIH) core complex, which is involved in general and transcription-coupled nucleotide excision repair (NER) of damaged DNA and, when complexed to CAK, in RNA transcription by RNA polymerase II. In NER, TFIIH acts by opening DNA around the lesion to allow the excision of the damaged oligonucleotide and its replacement by a new DNA fragment. In transcription, TFIIH has an essential role in transcription initiation. When the pre-initiation complex (PIC) has been established, TFIIH is required for promoter opening and promoter escape. Phosphorylation of the C-terminal tail (CTD) of the largest subunit of RNA polymerase II by the kinase module CAK controls the initiation of transcription. This Dictyostelium discoideum (Social amoeba) protein is General transcription factor IIH subunit 5 (gtf2h5).